Consider the following 315-residue polypeptide: Prephenate dehydratase (315 aa).

A Prephenate dehydratase domain is found at R3–V189. The ACT domain maps to S203–P280.

In terms of assembly, homodimer.

It carries out the reaction prephenate + H(+) = 3-phenylpyruvate + CO2 + H2O. Its pathway is amino-acid biosynthesis; L-phenylalanine biosynthesis; phenylpyruvate from prephenate: step 1/1. This is Prephenate dehydratase (pheA) from Mycobacterium ulcerans (strain Agy99).